The following is a 301-amino-acid chain: MSEEKSYCGFIAIVGRPNVGKSTLLNTLLGQKISITSRKAQTTRHRIVGIHTEGEYQAIYVDTPGLHMEEKRAINRLMNKAASSSIGDVELIIFVVEGTRWTADDEMVLNKLRDGRAPVILAVNKVDNVQEKADLLPHLQFLASQMNFLDIVPLSAESGMNVDTIAGIVRKHLPEAIHHFPEDYITDRSQRFMASEIIREKLMRFLGAELPYSVTVEIERFQTNERGGYDINGLILVEREGQKKMVIGNKGSKIKTIGIEARKDMQDMFEAPVHLELWVKVKSGWADDERALRSLGYGDDV.

The region spanning 7-175 is the Era-type G domain; that stretch reads YCGFIAIVGR…AGIVRKHLPE (169 aa). A G1 region spans residues 15–22; that stretch reads GRPNVGKS. 15–22 lines the GTP pocket; it reads GRPNVGKS. Residues 41-45 are G2; it reads QTTRH. Residues 62–65 form a G3 region; it reads DTPG. Residues 62–66 and 124–127 contribute to the GTP site; these read DTPGL and NKVD. The interval 124–127 is G4; that stretch reads NKVD. The tract at residues 154–156 is G5; that stretch reads LSA. In terms of domain architecture, KH type-2 spans 198-283; that stretch reads IREKLMRFLG…HLELWVKVKS (86 aa).

This sequence belongs to the TRAFAC class TrmE-Era-EngA-EngB-Septin-like GTPase superfamily. Era GTPase family. In terms of assembly, monomer.

The protein localises to the cytoplasm. Its subcellular location is the cell inner membrane. Functionally, an essential GTPase that binds both GDP and GTP, with rapid nucleotide exchange. Plays a role in 16S rRNA processing and 30S ribosomal subunit biogenesis and possibly also in cell cycle regulation and energy metabolism. The sequence is that of GTPase Era from Enterobacter sp. (strain 638).